The chain runs to 156 residues: Ribosome maturation factor RimP (156 aa).

Belongs to the RimP family.

Its subcellular location is the cytoplasm. In terms of biological role, required for maturation of 30S ribosomal subunits. This chain is Ribosome maturation factor RimP, found in Bacillus cereus (strain B4264).